The primary structure comprises 160 residues: Keratin-associated protein 9-6 (160 aa).

A run of 16 repeats spans residues 4–8 (CCSPG), 13–17 (CCRTT), 18–22 (CCRTT), 37–41 (CCQPS), 42–46 (CCVSS), 47–51 (CCQPY), 56–60 (CCQNT), 61–65 (CCRTT), 66–70 (CCQPT), 75–79 (CCQPS), 80–84 (CCSTP), 90–94 (CCGSS), 95–99 (CCGQT), 140–144 (CCQPC), 149–153 (CCVSS), and 154–158 (CCQHS). The 16 X 5 AA repeats of C-C-[GSVRQ]-[QTSPHN]-[TPSGYC] stretch occupies residues 4 to 158 (CCSPGCQPTC…CCVSSCCQHS (155 aa)).

This sequence belongs to the KRTAP type 9 family. In terms of assembly, interacts with hair keratins.

Its function is as follows. In the hair cortex, hair keratin intermediate filaments are embedded in an interfilamentous matrix, consisting of hair keratin-associated proteins (KRTAP), which are essential for the formation of a rigid and resistant hair shaft through their extensive disulfide bond cross-linking with abundant cysteine residues of hair keratins. The matrix proteins include the high-sulfur and high-glycine-tyrosine keratins. This Homo sapiens (Human) protein is Keratin-associated protein 9-6.